The sequence spans 944 residues: Bifunctional uridylyltransferase/uridylyl-removing enzyme (944 aa).

The segment at 1–371 (MRDLDFTNIL…RFTHRNRKIA (371 aa)) is uridylyltransferase. Positions 372-727 (GSVEFVEDRG…VRTDSFHAIT (356 aa)) are uridylyl-removing. One can recognise an HD domain in the interval 488 to 604 (VDEHLIRTVD…TDFADRVQSL (117 aa)). ACT domains are found at residues 728–809 (EITV…EVIA) and 839–918 (VIEV…LRER). The interval 911 to 944 (EEDELRERMPSGIIAPAATARTPPASEKKAGSPI) is disordered. The span at 925 to 935 (APAATARTPPA) shows a compositional bias: low complexity.

The protein belongs to the GlnD family. Mg(2+) is required as a cofactor.

It carries out the reaction [protein-PII]-L-tyrosine + UTP = [protein-PII]-uridylyl-L-tyrosine + diphosphate. It catalyses the reaction [protein-PII]-uridylyl-L-tyrosine + H2O = [protein-PII]-L-tyrosine + UMP + H(+). Uridylyltransferase (UTase) activity is inhibited by glutamine, while glutamine likely activates uridylyl-removing (UR) activity. Its function is as follows. Modifies, by uridylylation and deuridylylation, the PII regulatory proteins GlnB and GlnK, in response to the nitrogen status of the cell that GlnD senses through the glutamine level. Under low glutamine levels, catalyzes the conversion of the PII proteins and UTP to PII-UMP and PPi, while under higher glutamine levels, GlnD likely hydrolyzes PII-UMP to PII and UMP (deuridylylation). Thus, controls uridylylation state and activity of the PII proteins, and plays an important role in the regulation of nitrogen metabolism. In Rhizobium leguminosarum bv. viciae, this protein is Bifunctional uridylyltransferase/uridylyl-removing enzyme.